Here is a 367-residue protein sequence, read N- to C-terminus: Phospho-N-acetylmuramoyl-pentapeptide-transferase (367 aa).

The next 10 helical transmembrane spans lie at 34–54, 78–98, 101–121, 135–155, 175–195, 206–226, 246–266, 270–290, 295–315, and 344–364; these read GAVV…IDHL, TPTM…VLWA, LNPY…VGFY, FGSK…CYAL, TVLH…VGAG, GLAI…AYLA, LAVL…FNAP, IFMG…IAVA, IVLA…IVQV, and QIVI…LSTL.

It belongs to the glycosyltransferase 4 family. MraY subfamily. It depends on Mg(2+) as a cofactor.

The protein localises to the cell inner membrane. It catalyses the reaction UDP-N-acetyl-alpha-D-muramoyl-L-alanyl-gamma-D-glutamyl-meso-2,6-diaminopimeloyl-D-alanyl-D-alanine + di-trans,octa-cis-undecaprenyl phosphate = di-trans,octa-cis-undecaprenyl diphospho-N-acetyl-alpha-D-muramoyl-L-alanyl-D-glutamyl-meso-2,6-diaminopimeloyl-D-alanyl-D-alanine + UMP. It functions in the pathway cell wall biogenesis; peptidoglycan biosynthesis. Its function is as follows. Catalyzes the initial step of the lipid cycle reactions in the biosynthesis of the cell wall peptidoglycan: transfers peptidoglycan precursor phospho-MurNAc-pentapeptide from UDP-MurNAc-pentapeptide onto the lipid carrier undecaprenyl phosphate, yielding undecaprenyl-pyrophosphoryl-MurNAc-pentapeptide, known as lipid I. This chain is Phospho-N-acetylmuramoyl-pentapeptide-transferase, found in Bradyrhizobium diazoefficiens (strain JCM 10833 / BCRC 13528 / IAM 13628 / NBRC 14792 / USDA 110).